The following is a 236-amino-acid chain: UPF0257 lipoprotein YnfC (236 aa).

The signal sequence occupies residues 1-16 (MKYKLLPCLLAIFLTG). C17 carries the N-palmitoyl cysteine lipid modification. Residue C17 is the site of S-diacylglycerol cysteine attachment.

It belongs to the UPF0257 family.

It is found in the cell membrane. The chain is UPF0257 lipoprotein YnfC (ynfC) from Shigella flexneri.